The primary structure comprises 466 residues: ATP synthase subunit beta (466 aa).

148–155 is an ATP binding site; sequence GGAGVGKT.

The protein belongs to the ATPase alpha/beta chains family. As to quaternary structure, F-type ATPases have 2 components, CF(1) - the catalytic core - and CF(0) - the membrane proton channel. CF(1) has five subunits: alpha(3), beta(3), gamma(1), delta(1), epsilon(1). CF(0) has three main subunits: a(1), b(2) and c(9-12). The alpha and beta chains form an alternating ring which encloses part of the gamma chain. CF(1) is attached to CF(0) by a central stalk formed by the gamma and epsilon chains, while a peripheral stalk is formed by the delta and b chains.

It is found in the cell inner membrane. It catalyses the reaction ATP + H2O + 4 H(+)(in) = ADP + phosphate + 5 H(+)(out). In terms of biological role, produces ATP from ADP in the presence of a proton gradient across the membrane. The catalytic sites are hosted primarily by the beta subunits. This Xylella fastidiosa (strain 9a5c) protein is ATP synthase subunit beta.